We begin with the raw amino-acid sequence, 135 residues long: Probable transporter XF_0766 (135 aa).

4 helical membrane-spanning segments follow: residues 4 to 24 (YWYP…LLLL), 45 to 65 (AQDI…SVIF), 71 to 91 (VTVA…GLGT), and 114 to 134 (IVAT…MGVY).

The protein belongs to the TsuA/YedE (TC 9.B.102) family.

Its subcellular location is the cell inner membrane. The chain is Probable transporter XF_0766 from Xylella fastidiosa (strain 9a5c).